The primary structure comprises 575 residues: Serine/threonine-protein kinase Pink1, mitochondrial (575 aa).

The transit peptide at 1–51 (MSLLAYTNLLLQNGRIFRYYKKANIKKFIKKIIKLDLKSTPSEASVSRQTF) directs the protein to the mitochondrion. The Mitochondrial intermembrane portion of the chain corresponds to 52 to 94 (LSTGLNSVKNAVQLQARKLLINNVLERVTPTLNSDLKKKAAKR). The helical transmembrane segment at 95–118 (LFYGDSAPFFALVGVSLASGSGLL) threads the bilayer. Residues 119–575 (TKDDELEGIC…KWIQELHIYN (457 aa)) are Cytoplasmic-facing. Lys193 is a binding site for ATP. Phosphoserine; by autocatalysis occurs at positions 202 and 204. Residue Glu214 participates in Mg(2+) binding. At Thr305 the chain carries Phosphothreonine; by autocatalysis. The Proton acceptor role is filled by Asp334. Asn339 and Asp357 together coordinate Mg(2+).

This sequence belongs to the protein kinase superfamily. Ser/Thr protein kinase family. Requires Mg(2+) as cofactor. In terms of processing, proteolytically cleaved. In healthy cells, the precursor is continuously imported into mitochondria where it is proteolytically cleaved into its short form by the mitochondrial rhomboid protease rho-7 (8231301). The short form is then released into the cytosol where it rapidly undergoes proteasome-dependent degradation. In unhealthy cells, when cellular stress conditions lead to the loss of mitochondrial membrane potential, mitochondrial import is impaired leading to the precursor accumulating on the outer mitochondrial membrane (OMM). Post-translationally, autophosphorylated. Autophosphorylated on Ser-202, which activates kinase activity. Loss of mitochondrial membrane potential results in the precursor accumulating on the outer mitochondrial membrane (OMM) where it is activated by autophosphorylation at Ser-202. Autophosphorylation is sufficient and essential for selective recruitment of park to depolarized mitochondria, likely via Pink1-dependent phosphorylation of polyubiquitin chains. Also autophosphorylated at Ser-204 and Thr-305.

It is found in the mitochondrion outer membrane. Its subcellular location is the mitochondrion inner membrane. The protein localises to the cytoplasm. It localises to the cytosol. It catalyses the reaction L-seryl-[protein] + ATP = O-phospho-L-seryl-[protein] + ADP + H(+). The enzyme catalyses L-threonyl-[protein] + ATP = O-phospho-L-threonyl-[protein] + ADP + H(+). Its function is as follows. Acts as a serine/threonine-protein kinase. Exhibits a substrate preference for proline at position P+1 and a general preference at several residues for basic residues such as arginine. Also exhibits moderate preferences for a phosphotyrosine at position P-3 and a tryptophan at P-5. Critical to mitochondrial homeostasis it mediates several pathways that maintain mitochondrial health and function Protects against mitochondrial dysfunction during cellular stress by phosphorylating mitochondrial proteins such as park and likely Drp1, to coordinate mitochondrial quality control mechanisms that remove and replace dysfunctional mitochondrial components. Depending on the severity of mitochondrial damage and/or dysfunction, activity ranges from preventing apoptosis and stimulating mitochondrial biogenesis to regulating mitochondrial dynamics and eliminating severely damaged mitochondria via mitophagy. Appears to be particularly important in maintaining the physiology and function of cells with high energy demands that are undergoing stress or altered metabolic environment, including spermatids, muscle cells and neurons such as the dopaminergic (DA) neurons. Mediates the translocation and activation of park at the outer membrane (OMM) of dysfunctional/depolarized mitochondria. At the OMM of damaged mitochondria, phosphorylates pre-existing polyubiquitin chains, the Pink1-phosphorylated polyubiquitin then recruits park from the cytosol to the OMM where park is fully activated by phosphorylation at 'Ser-94' by Pink1. When cellular stress results in irreversible mitochondrial damage, functions with park to promote the clearance of dysfunctional and/or depolarized mitochondria by selective autophagy (mitophagy). The Pink1-park pathway also promotes fission and/or inhibits fusion of damaged mitochondria, by phosphorylating and thus promoting the park-dependent degradation of proteins involved in mitochondrial fusion/fission such as Marf, Opa1 and fzo. This prevents the refusion of unhealthy mitochondria with the mitochondrial network or initiates mitochondrial fragmentation facilitating their later engulfment by autophagosomes. Also likely to promote mitochondrial fission independently of park and Atg7-mediated mitophagy, via the phosphorylation and activation of Drp1. Regulates motility of damaged mitochondria by phosphorylating Miro which likely promotes its park-dependent degradation by the proteasome; in motor neurons, this inhibits mitochondrial intracellular anterograde transport along the axons which probably increases the chance of the mitochondria being eliminated in the soma. The Pink1-park pathway is also involved in mitochondrial regeneration processes such as promoting mitochondrial biogenesis, activating localized mitochondrial repair, promoting selective turnover of mitochondrial proteins and initiating the mitochondrial import of endogenous proteins. Involved in mitochondrial biogenesis by promoting the park-dependent ubiquitination of transcriptional repressor Paris which leads to its subsequent proteasomal degradation and allows activation of the transcription factor srl. Functions with park to promote localized mitochondrial repair by activating the translation of specific nuclear-encoded mitochondrial RNAs (nc-mtRNAs) on the mitochondrial surface, including several key electron transport chain component nc-mtRNAs. During oogenesis, phosphorylates and inactivates larp on the membrane of defective mitochondria, thus impairing local translation and mtDNA replication and consequently, reducing transmission of deleterious mtDNA mutations to the mature oocyte. Phosphorylates the mitochondrial acyl-CoA dehydrogenase Mcad, and appears to be important for maintaining fatty acid and amino acid metabolism via a mechanism that is independent of it's role in maintaining production of ATP. The chain is Serine/threonine-protein kinase Pink1, mitochondrial from Pediculus humanus subsp. corporis (Body louse).